We begin with the raw amino-acid sequence, 238 residues long: Sarcospan (238 aa).

Positions 1-33 (MGKDRQPRGQQRQGDAAGPDDPGPKKGAGTREQ) are disordered. The Extracellular segment spans residues 1-48 (MGKDRQPRGQQRQGDAAGPDDPGPKKGAGTREQRGEEEAQTCCGCRFP). A compositionally biased stretch (low complexity) spans 8 to 20 (RGQQRQGDAAGPD). A helical transmembrane segment spans residues 49–69 (LLLALLQLALGVAVTVVGFLM). Over 70–81 (ASVSSSLLVRAT) the chain is Cytoplasmic. A helical membrane pass occupies residues 82–102 (PYWAGIIVCVVAYLGLFMLCV). Residues 103–117 (SYQVDERTCIQFSMK) lie on the Cytoplasmic side of the membrane. The chain crosses the membrane as a helical span at residues 118–138 (LLYFVLSALGLVVCVLAVAFA). The Extracellular segment spans residues 139-188 (AHHYSLLTHLTCENAPDSCQCKLPSSEPLSRTFVYRDVTDCTSITGTFQV). Residues 189–209 (FLLVQMVLNLVCGLVCLVACF) traverse the membrane as a helical segment. The Cytoplasmic segment spans residues 210 to 238 (VMWKHRYQVFYVGVRMCPLSASEGQQQKV).

The protein resides in the cell membrane. Its subcellular location is the sarcolemma. The protein localises to the postsynaptic cell membrane. Functionally, component of the dystrophin-glycoprotein complex (DGC), a complex that spans the muscle plasma membrane and forms a link between the F-actin cytoskeleton and the extracellular matrix. Preferentially associates with the sarcoglycan subcomplex of the DGC. This Oryctolagus cuniculus (Rabbit) protein is Sarcospan (SSPN).